The following is a 910-amino-acid chain: Disease resistance protein RPH8A (910 aa).

A coiled-coil region spans residues 15–57 (DLLSRESERLQGIDEQLDGLKRQLRSLQSLLKDADAKKHGSDR). Residues 146-459 (RQRVQREIRQ…AEGIYDGSTI (314 aa)) enclose the NB-ARC domain. 192–199 (GMGGIGKT) contacts ATP.

The protein belongs to the disease resistance NB-LRR family. RPP8/HRT subfamily.

Functionally, disease resistance protein. Resistance proteins guard the plant against pathogens that contain an appropriate avirulence protein via an indirect interaction with this avirulence protein. That triggers a defense system including the hypersensitive response, which restricts the pathogen growth. In contrast to RPP8, it does not specifically recognize the Emco5 avirulence protein from Hyaloperonospora parasitica. This is Disease resistance protein RPH8A (RPH8A) from Arabidopsis thaliana (Mouse-ear cress).